A 1227-amino-acid chain; its full sequence is DNA-directed RNA polymerase subunit beta' (1227 aa).

The Zn(2+) site is built by Cys60, Cys62, Cys75, and Cys78. Positions 449, 451, and 453 each coordinate Mg(2+). Zn(2+) is bound by residues Cys847, Cys921, Cys928, and Cys931.

It belongs to the RNA polymerase beta' chain family. In terms of assembly, the RNAP catalytic core consists of 2 alpha, 1 beta, 1 beta' and 1 omega subunit. When a sigma factor is associated with the core the holoenzyme is formed, which can initiate transcription. Mg(2+) is required as a cofactor. Requires Zn(2+) as cofactor.

It catalyses the reaction RNA(n) + a ribonucleoside 5'-triphosphate = RNA(n+1) + diphosphate. In terms of biological role, DNA-dependent RNA polymerase catalyzes the transcription of DNA into RNA using the four ribonucleoside triphosphates as substrates. The sequence is that of DNA-directed RNA polymerase subunit beta' from Lysinibacillus sphaericus (strain C3-41).